A 313-amino-acid polypeptide reads, in one-letter code: GTP cyclohydrolase 1 (313 aa).

Positions Met1–Ser10 are enriched in basic and acidic residues. The disordered stretch occupies residues Met1–Glu120. A compositionally biased stretch (low complexity) spans Asp11–Pro20. Residues Lys29–His39 show a composition bias toward basic residues. The span at Ser40–Ser64 shows a compositional bias: basic and acidic residues. Residues Thr72–Ile102 are compositionally biased toward low complexity. Zn(2+) contacts are provided by Cys202, His205, and Cys273.

The protein belongs to the GTP cyclohydrolase I family. As to quaternary structure, toroid-shaped homodecamer, composed of two pentamers of five dimers.

The catalysed reaction is GTP + H2O = 7,8-dihydroneopterin 3'-triphosphate + formate + H(+). It functions in the pathway cofactor biosynthesis; 7,8-dihydroneopterin triphosphate biosynthesis; 7,8-dihydroneopterin triphosphate from GTP: step 1/1. GTP shows a positive allosteric effect, and tetrahydrobiopterin inhibits the enzyme activity. Its function is as follows. GTP cyclohydrolase 1 is the first enzyme in the biosynthetic pathway leading to folic acid. This Neurospora crassa (strain ATCC 24698 / 74-OR23-1A / CBS 708.71 / DSM 1257 / FGSC 987) protein is GTP cyclohydrolase 1 (gch-1).